A 610-amino-acid chain; its full sequence is MAKNLMLWLVIAVVLMSIFQNFSANNINNRKIDYSTFLSDVNQDQVREVHISGREMNIIRKDNGRYITYIPISDPKLLDNLLVKNVKIIGAAPEEQSFFTAIFISWFPMLLLIGVWVFFMRQMQVGGGKGAMSFGKSKARMLPEDQVKITFSDVAGCDEAKEEVQELVEYLKEPSRFQKLGGKIPKGILMVGPPGTGKTLLAKAIAGEAKVPFFTISGSDFVEMFVGVGASRVRDMFEHSRKVAPCIIFIDEIDAVGRQRGAGLGGGHDEREQTLNQMLVEMDGFDGNEGIILIAATNRPDVLDPALLRPGRFDRQIFVALPDIRGREKIIQVHMKKVPLGNNVDPMIIARGTPGFSGADLANLVNEAALFAARNNRDVVMMSDFESAKDKITMGSERRSMVMTEKQKESTAYHEAGHVIVGRLVPEHDPAHKVTIIPRGRALGVTFFLPKDDVLSINKNKLESQISTLYGGRLAEEIIYGVNNVSTGAHNDIKVATNLARNMVTQWGFSKKLGPLLYSEEEGEIFLGRTVTKSKHMSDETARIIDEEVKLLVEKNYNRAKKILEENLDILHAMKDALIKYETINSRQIDDLMKRKSIQSSNICTDDDNN.

Over 1 to 3 the chain is Cytoplasmic; that stretch reads MAK. The helical transmembrane segment at 4–24 threads the bilayer; it reads NLMLWLVIAVVLMSIFQNFSA. Over 25-97 the chain is Extracellular; sequence NNINNRKIDY…IIGAAPEEQS (73 aa). A helical membrane pass occupies residues 98–118; it reads FFTAIFISWFPMLLLIGVWVF. Topologically, residues 119-610 are cytoplasmic; the sequence is FMRQMQVGGG…SNICTDDDNN (492 aa). 192-199 is an ATP binding site; it reads GPPGTGKT. Histidine 414 contributes to the Zn(2+) binding site. The active site involves glutamate 415. Zn(2+) contacts are provided by histidine 418 and aspartate 492.

This sequence in the central section; belongs to the AAA ATPase family. The protein in the C-terminal section; belongs to the peptidase M41 family. As to quaternary structure, homohexamer. It depends on Zn(2+) as a cofactor.

It localises to the cell membrane. Functionally, acts as a processive, ATP-dependent zinc metallopeptidase for both cytoplasmic and membrane proteins. Plays a role in the quality control of integral membrane proteins. The polypeptide is ATP-dependent zinc metalloprotease FtsH (Buchnera aphidicola subsp. Baizongia pistaciae (strain Bp)).